The following is a 430-amino-acid chain: Dihydrolipoyllysine-residue acetyltransferase component of pyruvate dehydrogenase complex (430 aa).

One can recognise a Lipoyl-binding domain in the interval 2 to 77 (AFEFRLPDIG…VVGDVIVKID (76 aa)). N6-lipoyllysine is present on lysine 43. The segment at 80 to 122 (DAEDMQFKGHDDDSSSKEEPAKEEAPAEQAPVATQTEEVDENR) is disordered. Basic and acidic residues predominate over residues 84–104 (MQFKGHDDDSSSKEEPAKEEA). One can recognise a Peripheral subunit-binding (PSBD) domain in the interval 125–162 (KAMPSVRKYAREKGVNIKAVSGSGKNGRITKEDVDAYL). A disordered region spans residues 164 to 199 (GGAPTASNESAASATSEEVAETPAAPAAVSLEGDFP). Positions 166 to 193 (APTASNESAASATSEEVAETPAAPAAVS) are enriched in low complexity. The active site involves histidine 401.

Belongs to the 2-oxoacid dehydrogenase family. In terms of assembly, forms a 24-polypeptide structural core with octahedral symmetry. It depends on (R)-lipoate as a cofactor.

The enzyme catalyses N(6)-[(R)-dihydrolipoyl]-L-lysyl-[protein] + acetyl-CoA = N(6)-[(R)-S(8)-acetyldihydrolipoyl]-L-lysyl-[protein] + CoA. Functionally, the pyruvate dehydrogenase complex catalyzes the overall conversion of pyruvate to acetyl-CoA and CO(2). It contains multiple copies of three enzymatic components: pyruvate dehydrogenase (E1), dihydrolipoamide acetyltransferase (E2) and lipoamide dehydrogenase (E3). This chain is Dihydrolipoyllysine-residue acetyltransferase component of pyruvate dehydrogenase complex (pdhC), found in Staphylococcus aureus (strain Mu50 / ATCC 700699).